Consider the following 323-residue polypeptide: Methionyl-tRNA formyltransferase (323 aa).

Residue 113-116 (SLLP) coordinates (6S)-5,6,7,8-tetrahydrofolate.

It belongs to the Fmt family.

The enzyme catalyses L-methionyl-tRNA(fMet) + (6R)-10-formyltetrahydrofolate = N-formyl-L-methionyl-tRNA(fMet) + (6S)-5,6,7,8-tetrahydrofolate + H(+). Its function is as follows. Attaches a formyl group to the free amino group of methionyl-tRNA(fMet). The formyl group appears to play a dual role in the initiator identity of N-formylmethionyl-tRNA by promoting its recognition by IF2 and preventing the misappropriation of this tRNA by the elongation apparatus. The polypeptide is Methionyl-tRNA formyltransferase (Porphyromonas gingivalis (strain ATCC 33277 / DSM 20709 / CIP 103683 / JCM 12257 / NCTC 11834 / 2561)).